We begin with the raw amino-acid sequence, 333 residues long: Holliday junction branch migration complex subunit RuvB (333 aa).

Residues 1 to 182 (MDERLLSGES…FGVLSRLEYY (182 aa)) are large ATPase domain (RuvB-L). ATP is bound by residues leucine 21, arginine 22, glycine 63, lysine 66, threonine 67, threonine 68, 129–131 (EDF), arginine 172, tyrosine 182, and arginine 219. Residue threonine 67 coordinates Mg(2+). Residues 183 to 253 (TVDQLSAIVE…ITQMALELLQ (71 aa)) form a small ATPAse domain (RuvB-S) region. A head domain (RuvB-H) region spans residues 256–333 (KLGLDHIDHK…EHFGMEMPKV (78 aa)). DNA is bound by residues arginine 311 and arginine 316.

This sequence belongs to the RuvB family. Homohexamer. Forms an RuvA(8)-RuvB(12)-Holliday junction (HJ) complex. HJ DNA is sandwiched between 2 RuvA tetramers; dsDNA enters through RuvA and exits via RuvB. An RuvB hexamer assembles on each DNA strand where it exits the tetramer. Each RuvB hexamer is contacted by two RuvA subunits (via domain III) on 2 adjacent RuvB subunits; this complex drives branch migration. In the full resolvosome a probable DNA-RuvA(4)-RuvB(12)-RuvC(2) complex forms which resolves the HJ.

Its subcellular location is the cytoplasm. It catalyses the reaction ATP + H2O = ADP + phosphate + H(+). Its function is as follows. The RuvA-RuvB-RuvC complex processes Holliday junction (HJ) DNA during genetic recombination and DNA repair, while the RuvA-RuvB complex plays an important role in the rescue of blocked DNA replication forks via replication fork reversal (RFR). RuvA specifically binds to HJ cruciform DNA, conferring on it an open structure. The RuvB hexamer acts as an ATP-dependent pump, pulling dsDNA into and through the RuvAB complex. RuvB forms 2 homohexamers on either side of HJ DNA bound by 1 or 2 RuvA tetramers; 4 subunits per hexamer contact DNA at a time. Coordinated motions by a converter formed by DNA-disengaged RuvB subunits stimulates ATP hydrolysis and nucleotide exchange. Immobilization of the converter enables RuvB to convert the ATP-contained energy into a lever motion, pulling 2 nucleotides of DNA out of the RuvA tetramer per ATP hydrolyzed, thus driving DNA branch migration. The RuvB motors rotate together with the DNA substrate, which together with the progressing nucleotide cycle form the mechanistic basis for DNA recombination by continuous HJ branch migration. Branch migration allows RuvC to scan DNA until it finds its consensus sequence, where it cleaves and resolves cruciform DNA. This chain is Holliday junction branch migration complex subunit RuvB, found in Bacillus cereus (strain 03BB102).